The following is a 244-amino-acid chain: tRNA pseudouridine synthase A (244 aa).

Asp-52 serves as the catalytic Nucleophile. Residue Tyr-110 participates in substrate binding.

This sequence belongs to the tRNA pseudouridine synthase TruA family. In terms of assembly, homodimer.

The catalysed reaction is uridine(38/39/40) in tRNA = pseudouridine(38/39/40) in tRNA. Its function is as follows. Formation of pseudouridine at positions 38, 39 and 40 in the anticodon stem and loop of transfer RNAs. The polypeptide is tRNA pseudouridine synthase A (Brevibacillus brevis (strain 47 / JCM 6285 / NBRC 100599)).